Here is a 586-residue protein sequence, read N- to C-terminus: Protein cereblon (586 aa).

Disordered regions lie at residues 1–114 (MDDE…LPRW) and 158–194 (SQER…IDIG). The segment covering 14-37 (GRDEDVQLEDHSQAQGLQDRRVDA) has biased composition (basic and acidic residues). Residues 75-85 (MVEDGLQDDTA) are compositionally biased toward acidic residues. The span at 86–96 (SEGSHPSSDMS) shows a compositional bias: polar residues. Positions 159–168 (QERRRSRTSE) are enriched in basic and acidic residues. Acidic residues predominate over residues 170-179 (TSQEDVEQPE). The span at 180-190 (DPPPQQPPRPP) shows a compositional bias: pro residues. The Lon N-terminal domain maps to 226–452 (HMLIFLHQHI…LIKSTFTDES (227 aa)). Residues 451 to 560 (ESLFFCRYCN…LAGSSVRIGK (110 aa)) enclose the CULT domain. Cys456, Cys459, Cys525, and Cys528 together coordinate Zn(2+).

The protein belongs to the CRBN family. Likely a component of a DCX (DDB1-CUL4-X-box) protein ligase complex. May interact with pic/DDB1. In terms of processing, ubiquitinated.

The protein localises to the nucleus. It participates in protein modification; protein ubiquitination. Functionally, substrate recognition component of a DCX (DDB1-CUL4-X-box) E3 protein ligase complex that mediates the ubiquitination and subsequent proteasomal degradation of target proteins. Has an essential role in mediating growth by negatively regulating insulin signaling. It also has a role in maintaining presynaptic function in the neuromuscular junction synapses of third-instar larvae. This chain is Protein cereblon, found in Drosophila erecta (Fruit fly).